Reading from the N-terminus, the 450-residue chain is 3',5'-cyclic-AMP phosphodiesterase 7B (450 aa).

Residues 97-420 (LDEDYLGQAR…AQWKSLLPRQ (324 aa)) enclose the PDEase domain. H173 serves as the catalytic Proton donor. H177, H213, D214, and D323 together coordinate a divalent metal cation. The disordered stretch occupies residues 418–450 (PRQHRSRGSSGSGPDHDHAGQGTESEEQEGDSP). The residue at position 426 (S426) is a Phosphoserine. Residues 441 to 450 (ESEEQEGDSP) show a composition bias toward acidic residues.

Belongs to the cyclic nucleotide phosphodiesterase family. PDE7 subfamily. It depends on a divalent metal cation as a cofactor. As to expression, highly expressed in brain. Also expressed in heart, liver, skeletal muscle and pancreas.

The enzyme catalyses 3',5'-cyclic AMP + H2O = AMP + H(+). Its pathway is purine metabolism; 3',5'-cyclic AMP degradation; AMP from 3',5'-cyclic AMP: step 1/1. With respect to regulation, inhibited by dipyridamole, IBMX and SCH 51866. Insensitive to zaprinast, rolipram, and milrinone. Its function is as follows. Hydrolyzes the second messenger cAMP, which is a key regulator of many important physiological processes. May be involved in the control of cAMP-mediated neural activity and cAMP metabolism in the brain. The sequence is that of 3',5'-cyclic-AMP phosphodiesterase 7B from Homo sapiens (Human).